The sequence spans 545 residues: Chaperonin GroEL (545 aa).

ATP is bound by residues 30–33 (TLGP), K51, 87–91 (DGTTT), G415, 479–481 (NAA), and D495. The segment at 526 to 545 (KEDKPDLGGAGGMGGMGGMM) is disordered. Residues 533–545 (GGAGGMGGMGGMM) are compositionally biased toward gly residues.

The protein belongs to the chaperonin (HSP60) family. As to quaternary structure, forms a cylinder of 14 subunits composed of two heptameric rings stacked back-to-back. Interacts with the co-chaperonin GroES.

It localises to the cytoplasm. The catalysed reaction is ATP + H2O + a folded polypeptide = ADP + phosphate + an unfolded polypeptide.. Its function is as follows. Together with its co-chaperonin GroES, plays an essential role in assisting protein folding. The GroEL-GroES system forms a nano-cage that allows encapsulation of the non-native substrate proteins and provides a physical environment optimized to promote and accelerate protein folding. In Sodalis glossinidius, this protein is Chaperonin GroEL.